Consider the following 429-residue polypeptide: Ribosomal RNA small subunit methyltransferase B (429 aa).

Residues 254–260 (CAAPGGK), Asp277, Asp303, and Asp322 contribute to the S-adenosyl-L-methionine site. Residue Cys375 is the Nucleophile of the active site.

The protein belongs to the class I-like SAM-binding methyltransferase superfamily. RsmB/NOP family.

It is found in the cytoplasm. It carries out the reaction cytidine(967) in 16S rRNA + S-adenosyl-L-methionine = 5-methylcytidine(967) in 16S rRNA + S-adenosyl-L-homocysteine + H(+). Specifically methylates the cytosine at position 967 (m5C967) of 16S rRNA. This Yersinia pestis bv. Antiqua (strain Angola) protein is Ribosomal RNA small subunit methyltransferase B.